Reading from the N-terminus, the 154-residue chain is Iron-sulfur cluster assembly 2 homolog, mitochondrial (154 aa).

A mitochondrion-targeting transit peptide spans 1–8; sequence MAAAWGSS. Residues 29–49 form a disordered region; sequence SLGPQARREASSSSPEAGEGQ. A compositionally biased stretch (low complexity) spans 39–49; sequence SSSSPEAGEGQ. The Fe cation site is built by Cys-79, Cys-144, and Cys-146.

This sequence belongs to the HesB/IscA family. Heterotetramer; forms a dimer of dimers with IBA57. Interacts with [2Fe-2S]-ISCA2 forming the heterodimer [2Fe- 2S]-ISCA2-IBA57 complex; [2Fe-2S] cluster binding is absolutely required to promote the complex formation.

The protein localises to the mitochondrion. In terms of biological role, involved in the maturation of mitochondrial 4Fe-4S proteins functioning late in the iron-sulfur cluster assembly pathway. May be involved in the binding of an intermediate of Fe/S cluster assembly. The sequence is that of Iron-sulfur cluster assembly 2 homolog, mitochondrial (ISCA2) from Homo sapiens (Human).